The following is a 158-amino-acid chain: MFDILMYLFENYVHSEVELLVDEDELTKELTRAGFHQSEILKALTWLERLAELQEGDKPYLCNHDQHSFRIYTKDEMEKLDVECRGFLLFLEQVKVLNVETREMVIDRVMELDEPALILEDLKWVILMVLFNAPGHESAYEQMEDLIFEQPEEGRLHS.

Belongs to the Smg family.

The sequence is that of Protein Smg homolog from Shewanella oneidensis (strain ATCC 700550 / JCM 31522 / CIP 106686 / LMG 19005 / NCIMB 14063 / MR-1).